The chain runs to 199 residues: Imidazole glycerol phosphate synthase subunit HisH 2 (199 aa).

Residues 1–199 (MIAVIDVSGN…NNFLSLESKC (199 aa)) form the Glutamine amidotransferase type-1 domain. The Nucleophile role is filled by Cys-76. Catalysis depends on residues His-177 and Glu-179.

Heterodimer of HisH and HisF.

The protein localises to the cytoplasm. The catalysed reaction is 5-[(5-phospho-1-deoxy-D-ribulos-1-ylimino)methylamino]-1-(5-phospho-beta-D-ribosyl)imidazole-4-carboxamide + L-glutamine = D-erythro-1-(imidazol-4-yl)glycerol 3-phosphate + 5-amino-1-(5-phospho-beta-D-ribosyl)imidazole-4-carboxamide + L-glutamate + H(+). The enzyme catalyses L-glutamine + H2O = L-glutamate + NH4(+). Its pathway is amino-acid biosynthesis; L-histidine biosynthesis; L-histidine from 5-phospho-alpha-D-ribose 1-diphosphate: step 5/9. IGPS catalyzes the conversion of PRFAR and glutamine to IGP, AICAR and glutamate. The HisH subunit provides the glutamine amidotransferase activity that produces the ammonia necessary to HisF for the synthesis of IGP and AICAR. This chain is Imidazole glycerol phosphate synthase subunit HisH 2, found in Legionella pneumophila (strain Lens).